Consider the following 457-residue polypeptide: Multidrug resistance protein MdtK (457 aa).

12 helical membrane-spanning segments follow: residues 11 to 31 (LLAL…MGFV), 53 to 73 (IWLP…PVIA), 93 to 113 (WLAG…GYII), 127 to 147 (AVGY…FQVA), 160 to 180 (GMVM…IFIY), 188 to 208 (LGGI…FIAM), 243 to 263 (LPIA…ALLV), 276 to 296 (IALN…AAVT), 314 to 334 (AART…IFTV), 350 to 370 (VVAL…SDSI), 387 to 407 (IFFI…YILA), and 418 to 438 (PAGF…LMML).

The protein belongs to the multi antimicrobial extrusion (MATE) (TC 2.A.66.1) family. MdtK subfamily.

The protein localises to the cell inner membrane. In terms of biological role, multidrug efflux pump that functions probably as a Na(+)/drug antiporter. In Salmonella enteritidis PT4 (strain P125109), this protein is Multidrug resistance protein MdtK.